The sequence spans 447 residues: tRNA(Ile)-lysidine synthase (447 aa).

ATP is bound at residue 31–36 (SGGMDS).

This sequence belongs to the tRNA(Ile)-lysidine synthase family.

The protein resides in the cytoplasm. The catalysed reaction is cytidine(34) in tRNA(Ile2) + L-lysine + ATP = lysidine(34) in tRNA(Ile2) + AMP + diphosphate + H(+). In terms of biological role, ligates lysine onto the cytidine present at position 34 of the AUA codon-specific tRNA(Ile) that contains the anticodon CAU, in an ATP-dependent manner. Cytidine is converted to lysidine, thus changing the amino acid specificity of the tRNA from methionine to isoleucine. The sequence is that of tRNA(Ile)-lysidine synthase from Pseudothermotoga lettingae (strain ATCC BAA-301 / DSM 14385 / NBRC 107922 / TMO) (Thermotoga lettingae).